The primary structure comprises 228 residues: Probable septum site-determining protein MinC (228 aa).

It belongs to the MinC family. Interacts with MinD and FtsZ.

Functionally, cell division inhibitor that blocks the formation of polar Z ring septums. Rapidly oscillates between the poles of the cell to destabilize FtsZ filaments that have formed before they mature into polar Z rings. Prevents FtsZ polymerization. The sequence is that of Probable septum site-determining protein MinC from Bacillus anthracis (strain A0248).